An 816-amino-acid chain; its full sequence is Fibroblast growth factor receptor (816 aa).

An N-terminal signal peptide occupies residues 1–19; the sequence is MISDWCVVLVLLMSRLVFG. At 20–370 the chain is on the extracellular side; it reads LNFTEPVNYI…YKEESVEKTV (351 aa). N-linked (GlcNAc...) asparagine glycans are attached at residues asparagine 21, asparagine 69, asparagine 119, asparagine 156, asparagine 171, asparagine 244, asparagine 274, asparagine 313, and asparagine 321. Residues 25 to 105 enclose the Ig-like C2-type 1 domain; sequence PVNYILKLGE…VTAMNEESVQ (81 aa). The cysteines at positions 43 and 94 are disulfide-linked. An Ig-like C2-type 2 domain is found at 126–217; the sequence is LRIKNDISLL…GKIEHIMTVE (92 aa). A disulfide bridge links cysteine 147 with cysteine 201. The chain crosses the membrane as a helical span at residues 371-391; the sequence is IFIVITSMLAGLIFVAFVIFF. At 392-816 the chain is on the cytoplasmic side; that stretch reads ICRVRSKDKF…DILLSHYAVS (425 aa). Positions 474–747 constitute a Protein kinase domain; it reads LETDCLLGEG…QLIEDLERML (274 aa). Residues 480-488 and lysine 508 contribute to the ATP site; that span reads LGEGAFGRV. Aspartate 612 serves as the catalytic Proton acceptor. Tyrosine 643 carries the post-translational modification Phosphotyrosine; by autocatalysis.

This sequence belongs to the protein kinase superfamily. Tyr protein kinase family. Fibroblast growth factor receptor subfamily.

The protein resides in the membrane. The catalysed reaction is L-tyrosyl-[protein] + ATP = O-phospho-L-tyrosyl-[protein] + ADP + H(+). Functionally, receptor for basic fibroblast growth factor. The polypeptide is Fibroblast growth factor receptor (FGFR) (Hydra vulgaris (Hydra)).